The chain runs to 201 residues: dITP/XTP pyrophosphatase (201 aa).

Position 8–13 (8–13 (SNNPGK)) interacts with substrate. Residues E40 and D69 each contribute to the Mg(2+) site. D69 serves as the catalytic Proton acceptor. Substrate-binding positions include S70, 155–158 (FGYD), K178, and 183–184 (HR).

The protein belongs to the HAM1 NTPase family. In terms of assembly, homodimer. Mg(2+) is required as a cofactor.

It carries out the reaction XTP + H2O = XMP + diphosphate + H(+). The catalysed reaction is dITP + H2O = dIMP + diphosphate + H(+). The enzyme catalyses ITP + H2O = IMP + diphosphate + H(+). Its function is as follows. Pyrophosphatase that catalyzes the hydrolysis of nucleoside triphosphates to their monophosphate derivatives, with a high preference for the non-canonical purine nucleotides XTP (xanthosine triphosphate), dITP (deoxyinosine triphosphate) and ITP. Seems to function as a house-cleaning enzyme that removes non-canonical purine nucleotides from the nucleotide pool, thus preventing their incorporation into DNA/RNA and avoiding chromosomal lesions. The sequence is that of dITP/XTP pyrophosphatase from Ralstonia nicotianae (strain ATCC BAA-1114 / GMI1000) (Ralstonia solanacearum).